The following is a 360-amino-acid chain: D-alanine--D-alanine ligase (360 aa).

Positions 146–352 constitute an ATP-grasp domain; that stretch reads KLCVADAGIA…YRNLITRLLE (207 aa). 179–234 is an ATP binding site; sequence EAQVSYPLFVKPASLGSSIGISKVHNREELHPALQAACALDWKVVVESTVKGREIE. The Mg(2+) site is built by Asp-305, Glu-319, and Asn-321.

It belongs to the D-alanine--D-alanine ligase family. Requires Mg(2+) as cofactor. It depends on Mn(2+) as a cofactor.

The protein resides in the cytoplasm. The enzyme catalyses 2 D-alanine + ATP = D-alanyl-D-alanine + ADP + phosphate + H(+). Its pathway is cell wall biogenesis; peptidoglycan biosynthesis. Cell wall formation. This Chlorobium chlorochromatii (strain CaD3) protein is D-alanine--D-alanine ligase.